We begin with the raw amino-acid sequence, 580 residues long: DBIRD complex subunit ZNF326 (580 aa).

Residues 1 to 124 (MDFEDDYVHS…YRNSLDSFGG (124 aa)) form a mediates transcriptional activation region. Phosphoserine is present on residues serine 48, serine 56, serine 63, serine 69, serine 81, serine 82, serine 91, serine 106, serine 114, serine 118, serine 121, and serine 137. Lysine 140 participates in a covalent cross-link: Glycyl lysine isopeptide (Lys-Gly) (interchain with G-Cter in SUMO2). The segment at 156 to 196 (SYSSFSSPHMKPAPVGSRGRGTPAYPESTFGSRSYDAFGGP) is disordered. Residue arginine 173 is modified to Omega-N-methylarginine. At serine 212 the chain carries Phosphoserine. Arginine 235 carries the omega-N-methylarginine modification. The Bipartite nuclear localization signal motif lies at 238-260 (KRKMMQIFIKPGGAFIKKPKLAK). Residue lysine 240 forms a Glycyl lysine isopeptide (Lys-Gly) (interchain with G-Cter in SUMO2) linkage. Lysine 247 carries the N6-acetyllysine; alternate modification. Lysine 247 participates in a covalent cross-link: Glycyl lysine isopeptide (Lys-Gly) (interchain with G-Cter in SUMO2); alternate. Glycyl lysine isopeptide (Lys-Gly) (interchain with G-Cter in SUMO2) cross-links involve residues lysine 254 and lysine 264. The segment at 256–302 (PKLAKPMDKMNLSKSPTKTDPKNEEEEKRRIEARREKQRRRREKNSE) is disordered. Phosphoserine is present on serine 270. Over residues 272 to 290 (TKTDPKNEEEEKRRIEARR) the composition is skewed to basic and acidic residues. A C2H2 AKAP95-type 1 zinc finger spans residues 314–336 (CSFCKFRTFEEKDIELHLESSSH). Lysine 401 participates in a covalent cross-link: Glycyl lysine isopeptide (Lys-Gly) (interchain with G-Cter in SUMO2). The C2H2 AKAP95-type 2 zinc-finger motif lies at 407–430 (CSACSVYIPALHSSVQLHLKSPDH). Glycyl lysine isopeptide (Lys-Gly) (interchain with G-Cter in SUMO2) cross-links involve residues lysine 459 and lysine 467. The tract at residues 470–580 (NPFEIQDHPQ…ATEQCEHRQM (111 aa)) is disordered. A compositionally biased stretch (acidic residues) spans 483 to 529 (IEGDEEDEEKIDEPIEEEEEEEEEEEEEGEEAGSVEEEGDVEGEEGT). Over residues 530 to 539 (AEAAAAGEAD) the composition is skewed to low complexity. Residues 540–562 (AVGEAEGAGEAEEAEEEEEEEGT) are compositionally biased toward acidic residues.

It belongs to the AKAP95 family. In terms of assembly, component of the DBIRD complex. Interacts with CCAR2; the interaction is direct. In terms of tissue distribution, ubiquitously expressed in adult tissues. Highly expressed in neuronal tissues such as brain and neural tube.

The protein localises to the nucleus matrix. Core component of the DBIRD complex, a multiprotein complex that acts at the interface between core mRNP particles and RNA polymerase II (RNAPII) and integrates transcript elongation with the regulation of alternative splicing: the DBIRD complex affects local transcript elongation rates and alternative splicing of a large set of exons embedded in (A + T)-rich DNA regions. May also play a role in neuronal differentiation. Able to bind DNA and activate expression in vitro. The protein is DBIRD complex subunit ZNF326 (Znf326) of Mus musculus (Mouse).